The sequence spans 113 residues: U11-theraphotoxin-Hhn1u (113 aa).

Positions 1-21 are cleaved as a signal peptide; sequence MNTVRVTFLLVFVLAVSLGQA. A propeptide spanning residues 22 to 74 is cleaved from the precursor; that stretch reads DKDENRMEMQEKTEQGKSYLDFAENLLLQKLEELEAKLLEEDSEESRNSRQKR. 3 disulfide bridges follow: cysteine 75–cysteine 90, cysteine 82–cysteine 95, and cysteine 89–cysteine 110.

The protein belongs to the neurotoxin 14 (magi-1) family. 01 (HNTX-16) subfamily. As to expression, expressed by the venom gland.

Its subcellular location is the secreted. In terms of biological role, probable ion channel inhibitor. This is U11-theraphotoxin-Hhn1u from Cyriopagopus hainanus (Chinese bird spider).